A 211-amino-acid polypeptide reads, in one-letter code: tRNA (guanine-N(7)-)-methyltransferase (211 aa).

S-adenosyl-L-methionine contacts are provided by E44, D69, D96, and D118. D118 is a catalytic residue. K122 contacts substrate. The interaction with RNA stretch occupies residues 124–129; that stretch reads RHEKRR. Substrate contacts are provided by residues D154 and 191–194; that span reads TEYE.

It belongs to the class I-like SAM-binding methyltransferase superfamily. TrmB family.

The enzyme catalyses guanosine(46) in tRNA + S-adenosyl-L-methionine = N(7)-methylguanosine(46) in tRNA + S-adenosyl-L-homocysteine. It participates in tRNA modification; N(7)-methylguanine-tRNA biosynthesis. Functionally, catalyzes the formation of N(7)-methylguanine at position 46 (m7G46) in tRNA. This is tRNA (guanine-N(7)-)-methyltransferase from Streptococcus pneumoniae (strain JJA).